The following is a 251-amino-acid chain: Octanoyltransferase (251 aa).

The region spanning 49-230 (DEIPDQLLIL…ALDDALAGRL (182 aa)) is the BPL/LPL catalytic domain. Substrate-binding positions include 87–94 (RGGRITWH), 160–162 (AIG), and 173–175 (GVA). The Acyl-thioester intermediate role is filled by Cys191.

Belongs to the LipB family.

It is found in the cytoplasm. It catalyses the reaction octanoyl-[ACP] + L-lysyl-[protein] = N(6)-octanoyl-L-lysyl-[protein] + holo-[ACP] + H(+). Its pathway is protein modification; protein lipoylation via endogenous pathway; protein N(6)-(lipoyl)lysine from octanoyl-[acyl-carrier-protein]: step 1/2. Catalyzes the transfer of endogenously produced octanoic acid from octanoyl-acyl-carrier-protein onto the lipoyl domains of lipoate-dependent enzymes. Lipoyl-ACP can also act as a substrate although octanoyl-ACP is likely to be the physiological substrate. This is Octanoyltransferase from Corynebacterium glutamicum (strain R).